We begin with the raw amino-acid sequence, 154 residues long: 6,7-dimethyl-8-ribityllumazine synthase (154 aa).

5-amino-6-(D-ribitylamino)uracil is bound by residues Phe22, 56–58 (AFE), and 80–82 (AVI). A (2S)-2-hydroxy-3-oxobutyl phosphate-binding site is contributed by 85-86 (ET). The Proton donor role is filled by His88. Phe113 contributes to the 5-amino-6-(D-ribitylamino)uracil binding site. Arg127 is a binding site for (2S)-2-hydroxy-3-oxobutyl phosphate.

The protein belongs to the DMRL synthase family.

The enzyme catalyses (2S)-2-hydroxy-3-oxobutyl phosphate + 5-amino-6-(D-ribitylamino)uracil = 6,7-dimethyl-8-(1-D-ribityl)lumazine + phosphate + 2 H2O + H(+). It participates in cofactor biosynthesis; riboflavin biosynthesis; riboflavin from 2-hydroxy-3-oxobutyl phosphate and 5-amino-6-(D-ribitylamino)uracil: step 1/2. In terms of biological role, catalyzes the formation of 6,7-dimethyl-8-ribityllumazine by condensation of 5-amino-6-(D-ribitylamino)uracil with 3,4-dihydroxy-2-butanone 4-phosphate. This is the penultimate step in the biosynthesis of riboflavin. The polypeptide is 6,7-dimethyl-8-ribityllumazine synthase (Thermoanaerobacter sp. (strain X514)).